The primary structure comprises 892 residues: Alanine--tRNA ligase (892 aa).

Zn(2+) contacts are provided by His-565, His-569, Cys-675, and His-679. Residues 852–871 form a disordered region; sequence MGGKGGGGRPDMAQAGGPEA.

This sequence belongs to the class-II aminoacyl-tRNA synthetase family. Requires Zn(2+) as cofactor.

Its subcellular location is the cytoplasm. The enzyme catalyses tRNA(Ala) + L-alanine + ATP = L-alanyl-tRNA(Ala) + AMP + diphosphate. Functionally, catalyzes the attachment of alanine to tRNA(Ala) in a two-step reaction: alanine is first activated by ATP to form Ala-AMP and then transferred to the acceptor end of tRNA(Ala). Also edits incorrectly charged Ser-tRNA(Ala) and Gly-tRNA(Ala) via its editing domain. The polypeptide is Alanine--tRNA ligase (Parvibaculum lavamentivorans (strain DS-1 / DSM 13023 / NCIMB 13966)).